Consider the following 162-residue polypeptide: Ribosome maturation factor RimP (162 aa).

The protein belongs to the RimP family.

It localises to the cytoplasm. Functionally, required for maturation of 30S ribosomal subunits. This Ralstonia pickettii (strain 12J) protein is Ribosome maturation factor RimP.